The chain runs to 321 residues: D-alanine--D-alanine ligase (321 aa).

One can recognise an ATP-grasp domain in the interval 121 to 315 (RSWFLTNNIN…FTNLIEEIIK (195 aa)). Residue 147 to 199 (PVKRPYVIKPLTQGSSIGVEVIFEEDDFNFADYNFPYGYQVIIEQYIKGRELQ) participates in ATP binding. Residues E268, E282, and N284 each contribute to the Mg(2+) site.

It belongs to the D-alanine--D-alanine ligase family. Mg(2+) serves as cofactor. Mn(2+) is required as a cofactor.

It localises to the cytoplasm. It carries out the reaction 2 D-alanine + ATP = D-alanyl-D-alanine + ADP + phosphate + H(+). It functions in the pathway cell wall biogenesis; peptidoglycan biosynthesis. Cell wall formation. This is D-alanine--D-alanine ligase from Rickettsia felis (strain ATCC VR-1525 / URRWXCal2) (Rickettsia azadi).